We begin with the raw amino-acid sequence, 1006 residues long: Collagen alpha-2(I) chain (1006 aa).

Residues 1–84 (SGGFDFSFLP…GFPGTPGLPG (84 aa)) are disordered. 4 positions are modified to 4-hydroxyproline: P10, P13, P35, and P41. Residues 28–64 (LMGPRGPPGASGAPGPQGFQGPAGEPGEPGQTGPAGA) show a composition bias toward low complexity. K86 carries the 5-hydroxylysine; alternate modification. Residue K86 is glycosylated (O-linked (Gal...) hydroxylysine; alternate). The disordered stretch occupies residues 99-1006 (GQPGAAGVKG…FGYEGDFYRA (908 aa)). Low complexity-rich tracts occupy residues 142–163 (SRGS…SAGP) and 209–230 (PGAN…AGAP). Residues 264 to 273 (GESGGKGEPG) show a composition bias toward gly residues. Residues 274–284 (SAGPQGPPGSS) are compositionally biased toward low complexity. Over residues 306–315 (GLRGGPGSRG) the composition is skewed to gly residues. A compositionally biased stretch (low complexity) spans 328–344 (PAGARGASGPAGVRGPS). P350 and P353 each carry 4-hydroxyproline. Low complexity predominate over residues 379-398 (LPGIDGRPGPIGPAGARGEA). A compositionally biased stretch (gly residues) spans 447–456 (GVQGGKGEQG). 2 stretches are compositionally biased toward low complexity: residues 503-520 (PGES…SRGP) and 532-542 (EPGVVGAPGTA). Residues 543-552 (GPAGSGGLPG) show a composition bias toward gly residues. Low complexity-rich tracts occupy residues 585–615 (AVGA…PRGS) and 622–642 (VGPA…QPGA). Positions 643–652 (KGERGTKGPK) are enriched in basic and acidic residues. Low complexity predominate over residues 660-670 (PTGPVGSAGPA). Gly residues predominate over residues 680–689 (GSRGDGGPPG). A compositionally biased stretch (low complexity) spans 691 to 700 (TGFPGAAGRT). Residues 737–746 (GETGAGGPPG) are compositionally biased toward gly residues. 2 stretches are compositionally biased toward low complexity: residues 754–781 (SGEP…LGLP) and 789–799 (LPGVAGAVGEP). Over residues 800–810 (GPLGIGPPGAR) the composition is skewed to gly residues. Low complexity predominate over residues 837 to 882 (YAGNPGPVGAAGAPGPHGAVGPAGKHGNRGEPGPVGSAGPVGALGP). Basic and acidic residues predominate over residues 892–903 (RGDKGEAGDKGP). Residues 976 to 988 (SGPPGPPGPPGPP) are compositionally biased toward pro residues.

The protein belongs to the fibrillar collagen family. As to quaternary structure, trimers of one alpha 2(I) and two alpha 1(I) chains. Interacts (via C-terminus) with TMEM131 (via PapD-L domain); the interaction is direct and is involved in assembly and TRAPPIII ER-to-Golgi transport complex-dependent secretion of collagen. Post-translationally, prolines at the third position of the tripeptide repeating unit (G-X-Y) are hydroxylated in some or all of the chains. In terms of tissue distribution, expressed in bones.

The protein localises to the secreted. Its subcellular location is the extracellular space. It is found in the extracellular matrix. In terms of biological role, type I collagen is a member of group I collagen (fibrillar forming collagen). In Choloepus hoffmanni (Hoffmann's two-fingered sloth), this protein is Collagen alpha-2(I) chain.